Here is a 474-residue protein sequence, read N- to C-terminus: Cysteine--tRNA ligase (474 aa).

C28 serves as a coordination point for Zn(2+). The 'HIGH' region signature appears at 30-40 (ITVYDLCHLGH). Zn(2+) contacts are provided by C209, H234, and E238. The 'KMSKS' region signature appears at 269–273 (KMSKS). Residue K272 coordinates ATP.

Belongs to the class-I aminoacyl-tRNA synthetase family. Monomer. Zn(2+) is required as a cofactor.

The protein localises to the cytoplasm. It catalyses the reaction tRNA(Cys) + L-cysteine + ATP = L-cysteinyl-tRNA(Cys) + AMP + diphosphate. This chain is Cysteine--tRNA ligase, found in Blochmanniella floridana.